A 231-amino-acid chain; its full sequence is Large ribosomal subunit protein uL1 (231 aa).

Belongs to the universal ribosomal protein uL1 family. As to quaternary structure, part of the 50S ribosomal subunit.

In terms of biological role, binds directly to 23S rRNA. The L1 stalk is quite mobile in the ribosome, and is involved in E site tRNA release. Protein L1 is also a translational repressor protein, it controls the translation of the L11 operon by binding to its mRNA. This Ruthia magnifica subsp. Calyptogena magnifica protein is Large ribosomal subunit protein uL1.